We begin with the raw amino-acid sequence, 184 residues long: MTINNENLIWIDLEMTGLNSEIHRIIEIATVITDTKLNIISEGPVIAIHQKEEHIVIMDEWNTKIHKKNGLIKRVQKSIYNESKAESKTIFFLKKWVPIQSSPICGNSVYQDRKFLARYMPNLENYFHYRCIDVSTIKELVNRWCPSFKKIKKQNHTALEDIHESIIELNFYKKIFFDTIKYSK.

Positions 8–169 (LIWIDLEMTG…EDIHESIIEL (162 aa)) constitute an Exonuclease domain. Residue tyrosine 129 is part of the active site.

This sequence belongs to the oligoribonuclease family.

The protein resides in the cytoplasm. Its function is as follows. 3'-to-5' exoribonuclease specific for small oligoribonucleotides. In Buchnera aphidicola subsp. Schizaphis graminum (strain Sg), this protein is Oligoribonuclease.